Reading from the N-terminus, the 220-residue chain is Probable transaldolase (220 aa).

K87 acts as the Schiff-base intermediate with substrate in catalysis.

Belongs to the transaldolase family. Type 3B subfamily.

It localises to the cytoplasm. It carries out the reaction D-sedoheptulose 7-phosphate + D-glyceraldehyde 3-phosphate = D-erythrose 4-phosphate + beta-D-fructose 6-phosphate. It functions in the pathway carbohydrate degradation; pentose phosphate pathway; D-glyceraldehyde 3-phosphate and beta-D-fructose 6-phosphate from D-ribose 5-phosphate and D-xylulose 5-phosphate (non-oxidative stage): step 2/3. Transaldolase is important for the balance of metabolites in the pentose-phosphate pathway. The protein is Probable transaldolase of Porphyromonas gingivalis (strain ATCC 33277 / DSM 20709 / CIP 103683 / JCM 12257 / NCTC 11834 / 2561).